The sequence spans 137 residues: Putative nucleoside diphosphate kinase (137 aa).

ATP is bound by residues Phe45, Arg73, Thr79, Arg90, and Asn100. His103 acts as the Pros-phosphohistidine intermediate in catalysis.

Belongs to the NDK family. It depends on Mg(2+) as a cofactor.

It carries out the reaction a 2'-deoxyribonucleoside 5'-diphosphate + ATP = a 2'-deoxyribonucleoside 5'-triphosphate + ADP. The catalysed reaction is a ribonucleoside 5'-diphosphate + ATP = a ribonucleoside 5'-triphosphate + ADP. Its function is as follows. Major role in the synthesis of nucleoside triphosphates other than ATP. The ATP gamma phosphate is transferred to the NDP beta phosphate via a ping-pong mechanism, using a phosphorylated active-site intermediate. The polypeptide is Putative nucleoside diphosphate kinase (NME2P1) (Homo sapiens (Human)).